The chain runs to 352 residues: DNA polymerase IV (352 aa).

Positions 3-187 (VLFVDFDYFY…LDIADVPGIG (185 aa)) constitute a UmuC domain. 2 residues coordinate Mg(2+): Asp-7 and Asp-105. Residue Glu-106 is part of the active site.

Belongs to the DNA polymerase type-Y family. As to quaternary structure, monomer. Interacts with the PCNA heterotrimer via PCNA1. Mg(2+) serves as cofactor.

It localises to the cytoplasm. It catalyses the reaction DNA(n) + a 2'-deoxyribonucleoside 5'-triphosphate = DNA(n+1) + diphosphate. Its function is as follows. Poorly processive, error-prone DNA polymerase involved in untargeted mutagenesis. Copies undamaged DNA at stalled replication forks, which arise in vivo from mismatched or misaligned primer ends. These misaligned primers can be extended by PolIV. Exhibits no 3'-5' exonuclease (proofreading) activity. It is involved in translesional synthesis. The chain is DNA polymerase IV (dbh) from Saccharolobus solfataricus (strain ATCC 35092 / DSM 1617 / JCM 11322 / P2) (Sulfolobus solfataricus).